A 170-amino-acid chain; its full sequence is Putative pre-16S rRNA nuclease (170 aa).

The protein belongs to the YqgF nuclease family.

The protein localises to the cytoplasm. Could be a nuclease involved in processing of the 5'-end of pre-16S rRNA. This Synechococcus sp. (strain JA-2-3B'a(2-13)) (Cyanobacteria bacterium Yellowstone B-Prime) protein is Putative pre-16S rRNA nuclease.